A 327-amino-acid polypeptide reads, in one-letter code: Putative HTH-type transcriptional regulatory protein Mbar_A2318 (327 aa).

The 59-residue stretch at L132–L190 folds into the HTH cro/C1-type domain. The segment at residues L143–E162 is a DNA-binding region (H-T-H motif).

The protein is Putative HTH-type transcriptional regulatory protein Mbar_A2318 of Methanosarcina barkeri (strain Fusaro / DSM 804).